The primary structure comprises 1495 residues: MGDTAKPYFVKRTKDRGTMDDDDFRRGHPQQDYLIIDDHAKGHGSKMEKGLQKKKITPGNYGNTPRKGPCAVSSNPYAFKNPIYSQPAWMNDSHKDQSKRWLSDEHTGNSDNWREFKPGPRIPVINRQRKDSFQENEDGYRWQDTRGCRTVRRLFHKDLTSLETTSEMEAGSPENKKQRSRPRKPRKTRNEENEQDGDLEGPVIDESVLSTKELLGLQQAEERLKRDCIDRLKRRPRNYPTAKYTCRLCDVLIESIAFAHKHIKEKRHKKNIKEKQEEELLTTLPPPTPSQINAVGIAIDKVVQEFGLHNENLEQRLEIKRIMENVFQHKLPDCSLRLYGSSCSRLGFKNSDVNIDIQFPAIMSQPDVLLLVQECLKNSDSFIDVDADFHARVPVVVCREKQSGLLCKVSAGNENACLTTKHLTALGKLEPKLVPLVIAFRYWAKLCSIDRPEEGGLPPYVFALMAIFFLQQRKEPLLPVYLGSWIEGFSLSKLGNFNLQDIEKDVVIWEHTDSAAGDTGITKEEAPRETPIKRGQVSLILDVKHQPSVPVGQLWVELLRFYALEFNLADLVISIRVKELVSRELKDWPKKRIAIEDPYSVKRNVARTLNSQPVFEYILHCLRTTYKYFALPHKITKSSLLKPLNAITCISEHSKEVINHHPDVQTKDDKLKNSVLAQGPGATSSAANTCKVQPLTLKETAESFGSPPKEEMGNEHISVHPENSDCIQADVNSDDYKGDKVYHPETGRKNEKEKVGRKGKHLLTVDQKRGEHVVCGSTRNNESESTLDLEGFQNPTAKECEGLATLDNKADLDGESTEGTEELEDSLNHFTHSVQGQTSEMIPSDEEEEDDEEEEEEEEPRLTINQREDEDGMANEDELDNTYTGSGDEDALSEEDDELGEAAKYEDVKECGKHVERALLVELNKISLKEENVCEEKNSPVDQSDFFYEFSKLIFTKGKSPTVVCSLCKREGHLKKDCPEDFKRIQLEPLPPLTPKFLNILDQVCIQCYKDFSPTIIEDQAREHIRQNLESFIRQDFPGTKLSLFGSSKNGFGFKQSDLDVCMTINGLETAEGLDCVRTIEELARVLRKHSGLRNILPITTAKVPIVKFFHLRSGLEVDISLYNTLALHNTRLLSAYSAIDPRVKYLCYTMKVFTKMCDIGDASRGSLSSYAYTLMVLYFLQQRNPPVIPVLQEIYKGEKKPEIFVDGWNIYFFDQIDELPTYWSECGKNTESVGQLWLGLLRFYTEEFDFKEHVISIRRKSLLTTFKKQWTSKYIVIEDPFDLNHNLGAGLSRKMTNFIMKAFINGRRVFGIPVKGFPKDYPSKMEYFFDPDVLTEGELAPNDRCCRICGKIGHFMKDCPMRRKVRRRRDQEDALNQRYPENKEKRSKEDKEIHNKYTEREVSTKEDKPIQCTPQKAKPMRAAADLGREKILRPPVEKWKRQDDKDLREKRCFICGREGHIKKECPQFKGSSGSLSSKYMTQGKASAKRTQQES.

Disordered regions lie at residues 1–30, 43–69, 89–140, and 162–205; these read MGDT…GHPQ, HGSK…RKGP, WMND…EDGY, and LETT…PVID. Over residues 15–26 the composition is skewed to basic and acidic residues; sequence DRGTMDDDDFRR. 2 positions are modified to phosphothreonine: threonine 57 and threonine 64. Composition is skewed to basic and acidic residues over residues 92-118 and 128-140; these read DSHK…EFKP and QRKD…EDGY. Residues serine 132 and serine 172 each carry the phosphoserine modification. A compositionally biased stretch (basic residues) spans 178 to 187; it reads QRSRPRKPRK. The Matrin-type zinc finger occupies 244–274; the sequence is YTCRLCDVLIESIAFAHKHIKEKRHKKNIKE. Positions 551 to 600 constitute a PAP-associated 1 domain; sequence VGQLWVELLRFYALEFNLADLVISIRVKELVSRELKDWPKKRIAIEDPYS. Serine 600 bears the Phosphoserine mark. Over residues 734-756 the composition is skewed to basic and acidic residues; sequence DDYKGDKVYHPETGRKNEKEKVG. Disordered regions lie at residues 734–757 and 831–898; these read DDYK…KVGR and THSV…EDDE. A compositionally biased stretch (polar residues) spans 831-841; sequence THSVQGQTSEM. Composition is skewed to acidic residues over residues 843-859, 868-880, and 887-898; these read PSDE…EEEE, EDED…DELD, and GDEDALSEEDDE. Position 844 is a phosphoserine (serine 844). Phosphoserine is present on residues serine 893 and serine 939. Residues 951-1495 form a sufficient for monouridylation activity region; the sequence is SKLIFTKGKS…ASAKRTQQES (545 aa). The CCHC-type 1 zinc-finger motif lies at 963–980; the sequence is VVCSLCKREGHLKKDCPE. Residues 1047-1050, 1057-1060, asparagine 1130, lysine 1152, 1170-1174, and histidine 1286 each bind UTP; these read SSKN, SDLD, and SYAYT. Positions 1058 and 1060 each coordinate Mg(2+). In terms of domain architecture, PAP-associated 2 spans 1233-1286; sequence SVGQLWLGLLRFYTEEFDFKEHVISIRRKSLLTTFKKQWTSKYIVIEDPFDLNH. The CCHC-type 2 zinc-finger motif lies at 1345 to 1362; it reads RCCRICGKIGHFMKDCPM. Disordered stretches follow at residues 1367-1424 and 1466-1495; these read RRRR…MRAA and CPQF…QQES. Residues 1381–1410 show a composition bias toward basic and acidic residues; the sequence is PENKEKRSKEDKEIHNKYTEREVSTKEDKP. The CCHC-type 3 zinc-finger motif lies at 1451–1468; sequence KRCFICGREGHIKKECPQ. The segment covering 1470 to 1485 has biased composition (polar residues); that stretch reads KGSSGSLSSKYMTQGK.

It belongs to the DNA polymerase type-B-like family. As to quaternary structure, interacts with MOV10; the interaction is RNA-dependent. Mg(2+) is required as a cofactor. It depends on Mn(2+) as a cofactor.

The protein localises to the cytoplasm. The enzyme catalyses RNA(n) + UTP = RNA(n)-3'-uridine ribonucleotide + diphosphate. In terms of biological role, uridylyltransferase that mediates the terminal uridylation of mRNAs with short (less than 25 nucleotides) poly(A) tails, hence facilitating global mRNA decay. Essential for both oocyte maturation and fertility. Through 3' terminal uridylation of mRNA, sculpts, with TUT7, the maternal transcriptome by eliminating transcripts during oocyte growth. Involved in microRNA (miRNA)-induced gene silencing through uridylation of deadenylated miRNA targets. Also functions as an integral regulator of microRNA biogenesiS using 3 different uridylation mechanisms. Acts as a suppressor of miRNA biogenesis by mediating the terminal uridylation of some miRNA precursors, including that of let-7 (pre-let-7). Uridylated pre-let-7 RNA is not processed by Dicer and undergo degradation. Pre-let-7 uridylation is strongly enhanced in the presence of LIN28A. In the absence of LIN28A, TUT7 and TUT4 monouridylate group II pre-miRNAs, which includes most of pre-let7 members, that shapes an optimal 3' end overhang for efficient processing. Add oligo-U tails to truncated pre-miRNAS with a 5' overhang which may promote rapid degradation of non-functional pre-miRNA species. Does not play a role in replication-dependent histone mRNA degradation. Due to functional redundancy between TUT4 and TUT7, the identification of the specific role of each of these proteins is difficult. TUT4 and TUT7 restrict retrotransposition of long interspersed element-1 (LINE-1) in cooperation with MOV10 counteracting the RNA chaperonne activity of L1RE1. TUT7 uridylates LINE-1 mRNAs in the cytoplasm which inhibits initiation of reverse transcription once in the nucleus, whereas uridylation by TUT4 destabilizes mRNAs in cytoplasmic ribonucleoprotein granules. This Homo sapiens (Human) protein is Terminal uridylyltransferase 7.